A 1383-amino-acid chain; its full sequence is Palladin (1383 aa).

3 disordered regions span residues 1–22, 52–169, and 183–238; these read MSGTSSHESFYDSLSDMQEESK, DSET…SQLC, and FKAA…KSPG. Residues 78–96 are compositionally biased toward basic and acidic residues; that stretch reads HPSHKETKLGEHASRRPQD. Residues 191–201 show a composition bias toward polar residues; it reads RSPNGESSSPD. S192 is subject to Phosphoserine. Low complexity predominate over residues 210-223; the sequence is QPSALLSASASQSP. In terms of domain architecture, Ig-like C2-type 1 spans 271 to 360; that stretch reads PRFIQKLRSQ…GSDTTSAEVF (90 aa). C292 and C344 are joined by a disulfide. A Phosphoserine modification is found at S401. The Ig-like C2-type 2 domain maps to 440–539; it reads PPVFTKELQN…ATSTAQLVVT (100 aa). A disulfide bridge connects residues C462 and C521. The interval 562 to 566 is interaction with VASP; sequence FPPPP. Disordered stretches follow at residues 609-653, 673-728, and 740-846; these read ETNG…LAKP, AGAR…SSGS, and AQNL…RFGH. Residue S632 is modified to Phosphoserine. A Phosphothreonine modification is found at T635. The residue at position 641 (S641) is a Phosphoserine. Positions 646-676 are interaction with LASP1; the sequence is PPPLLAKPKLDPLKLQQLQNQIRLEQEAGAR. The tract at residues 676-696 is interaction with SORBS2, SPIN90 and SRC; that stretch reads RQPPPAPRSAPPSPPFPPPPA. Over residues 677 to 697 the composition is skewed to pro residues; it reads QPPPAPRSAPPSPPFPPPPAF. Phosphoserine is present on residues S684, S688, and S728. Over residues 745-763 the composition is skewed to low complexity; sequence PASGHGTPASSPSSSSLPS. The interval 766 to 831 is interaction with EPS8; that stretch reads SPTPRQFGRA…PPPPPPLPSP (66 aa). Residues 796–831 are interaction with SORBS2, SPIN90, SRC and PFN1; the sequence is SPSPPPPPPPVFSPTAAFPVPDVFPLPPPPPPLPSP. Composition is skewed to pro residues over residues 797–807 and 817–830; these read PSPPPPPPPVF and DVFPLPPPPPPLPS. Residues 819–823 form an interaction with VASP region; the sequence is FPLPP. Residues 832–846 show a composition bias toward polar residues; it reads GQASHCSSPATRFGH. Positions 833–890 are interaction with ACTN; sequence QASHCSSPATRFGHSQTPAAFLSALLPSQPPPAAVNALGLPKGVTPAGFPKKASRTAR. Phosphoserine occurs at positions 893, 979, and 984. An Ig-like C2-type 3 domain is found at 1001–1085; it reads PFFEMKLKHY…MAANPQGRIS (85 aa). Positions 1096–1125 are disordered; sequence NQRGRSPRSPSGHPHVRRPRSRSRDSGDEN. Positions 1098-1108 are enriched in low complexity; sequence RGRSPRSPSGH. Phosphoserine occurs at positions 1101, 1104, 1106, and 1116. At S1118 the chain carries Phosphoserine; by PKB/AKT1. S1121 is modified (phosphoserine). 2 consecutive Ig-like C2-type domains span residues 1135–1226 and 1233–1324; these read PHFL…LVVA and PPVF…ARLD. 2 interaction with EZR regions span residues 1137–1226 and 1236–1326; these read FLQA…LVVA and FIEK…LDVY. Residues C1156 and C1208 are joined by a disulfide bond. Phosphoserine is present on S1352.

The protein belongs to the myotilin/palladin family. In terms of assembly, interacts with EPS8. Interacts with LASP1. Interacts with VASP. Interacts with ACTN. Interacts with SORBS2. Interacts with PFN1. Interacts with LPP. Interacts with SPIN90. Interacts with SRC. Interacts with EZR. Interacts with RAI14. Post-translationally, phosphorylated predominantly on serines and, to a lesser extent, on tyrosines. Phosphorylation at Ser-1118 by PKB/AKT1 modulates cytoskeletal organization and cell motility. In terms of tissue distribution, detected in both muscle and non-muscle tissues. High expression in prostate, ovary, colon, and kidney. Not detected in spleen, skeletal muscle, lung and peripheral blood lymphocytes (at protein level). Protein is overexpressed in FA6, HPAF, IMIM-PC2, SUIT-2 and PancTu-II sporadic pancreatic cancer cell lines.

It is found in the cytoplasm. The protein resides in the cytoskeleton. The protein localises to the cell junction. Its subcellular location is the focal adhesion. It localises to the myofibril. It is found in the sarcomere. The protein resides in the z line. The protein localises to the cell projection. Its subcellular location is the ruffle. It localises to the podosome. It is found in the lamellipodium. The protein resides in the axon. The protein localises to the growth cone. Its function is as follows. Cytoskeletal protein required for organization of normal actin cytoskeleton. Roles in establishing cell morphology, motility, cell adhesion and cell-extracellular matrix interactions in a variety of cell types. May function as a scaffolding molecule with the potential to influence both actin polymerization and the assembly of existing actin filaments into higher-order arrays. Binds to proteins that bind to either monomeric or filamentous actin. Localizes at sites where active actin remodeling takes place, such as lamellipodia and membrane ruffles. Different isoforms may have functional differences. Involved in the control of morphological and cytoskeletal changes associated with dendritic cell maturation. Involved in targeting ACTN to specific subcellular foci. The sequence is that of Palladin (PALLD) from Homo sapiens (Human).